Here is a 419-residue protein sequence, read N- to C-terminus: UDP-N-acetylglucosamine 1-carboxyvinyltransferase (419 aa).

22-23 (KN) lines the phosphoenolpyruvate pocket. Arginine 95 provides a ligand contact to UDP-N-acetyl-alpha-D-glucosamine. Cysteine 119 (proton donor) is an active-site residue. Cysteine 119 carries the 2-(S-cysteinyl)pyruvic acid O-phosphothioketal modification. UDP-N-acetyl-alpha-D-glucosamine-binding positions include 164 to 167 (KVSV), aspartate 308, and isoleucine 330.

It belongs to the EPSP synthase family. MurA subfamily.

It localises to the cytoplasm. It catalyses the reaction phosphoenolpyruvate + UDP-N-acetyl-alpha-D-glucosamine = UDP-N-acetyl-3-O-(1-carboxyvinyl)-alpha-D-glucosamine + phosphate. It functions in the pathway cell wall biogenesis; peptidoglycan biosynthesis. In terms of biological role, cell wall formation. Adds enolpyruvyl to UDP-N-acetylglucosamine. The polypeptide is UDP-N-acetylglucosamine 1-carboxyvinyltransferase (Rickettsia canadensis (strain McKiel)).